We begin with the raw amino-acid sequence, 172 residues long: NAD(P)H-quinone oxidoreductase subunit J (172 aa).

The protein belongs to the complex I 30 kDa subunit family. As to quaternary structure, NDH-1 can be composed of about 15 different subunits; different subcomplexes with different compositions have been identified which probably have different functions.

The protein localises to the cellular thylakoid membrane. It carries out the reaction a plastoquinone + NADH + (n+1) H(+)(in) = a plastoquinol + NAD(+) + n H(+)(out). It catalyses the reaction a plastoquinone + NADPH + (n+1) H(+)(in) = a plastoquinol + NADP(+) + n H(+)(out). Its function is as follows. NDH-1 shuttles electrons from an unknown electron donor, via FMN and iron-sulfur (Fe-S) centers, to quinones in the respiratory and/or the photosynthetic chain. The immediate electron acceptor for the enzyme in this species is believed to be plastoquinone. Couples the redox reaction to proton translocation, and thus conserves the redox energy in a proton gradient. Cyanobacterial NDH-1 also plays a role in inorganic carbon-concentration. The polypeptide is NAD(P)H-quinone oxidoreductase subunit J (Synechococcus elongatus (strain ATCC 33912 / PCC 7942 / FACHB-805) (Anacystis nidulans R2)).